Here is a 128-residue protein sequence, read N- to C-terminus: Sulfurtransferase TusD (128 aa).

The active-site Cysteine persulfide intermediate is the Cys-78.

This sequence belongs to the DsrE/TusD family. In terms of assembly, heterohexamer, formed by a dimer of trimers. The hexameric TusBCD complex contains 2 copies each of TusB, TusC and TusD. The TusBCD complex interacts with TusE.

The protein localises to the cytoplasm. In terms of biological role, part of a sulfur-relay system required for 2-thiolation of 5-methylaminomethyl-2-thiouridine (mnm(5)s(2)U) at tRNA wobble positions. Accepts sulfur from TusA and transfers it in turn to TusE. This chain is Sulfurtransferase TusD, found in Salmonella dublin (strain CT_02021853).